The following is a 369-amino-acid chain: UDP-3-O-acylglucosamine N-acyltransferase (369 aa).

His-252 (proton acceptor) is an active-site residue. Positions 348 to 369 (ERRQRGENNAPAQNKQDEEKSS) are disordered.

This sequence belongs to the transferase hexapeptide repeat family. LpxD subfamily. Homotrimer.

It carries out the reaction a UDP-3-O-[(3R)-3-hydroxyacyl]-alpha-D-glucosamine + a (3R)-hydroxyacyl-[ACP] = a UDP-2-N,3-O-bis[(3R)-3-hydroxyacyl]-alpha-D-glucosamine + holo-[ACP] + H(+). It participates in bacterial outer membrane biogenesis; LPS lipid A biosynthesis. In terms of biological role, catalyzes the N-acylation of UDP-3-O-acylglucosamine using 3-hydroxyacyl-ACP as the acyl donor. Is involved in the biosynthesis of lipid A, a phosphorylated glycolipid that anchors the lipopolysaccharide to the outer membrane of the cell. The sequence is that of UDP-3-O-acylglucosamine N-acyltransferase from Cupriavidus metallidurans (strain ATCC 43123 / DSM 2839 / NBRC 102507 / CH34) (Ralstonia metallidurans).